Here is a 201-residue protein sequence, read N- to C-terminus: Recombination protein RecR (201 aa).

The segment at 60–75 (CSVCGNVDTSDPCTIC) adopts a C4-type zinc-finger fold. Positions 83-178 (ATLIVVEDVS…RVTKLAHGVP (96 aa)) constitute a Toprim domain.

This sequence belongs to the RecR family.

Functionally, may play a role in DNA repair. It seems to be involved in an RecBC-independent recombinational process of DNA repair. It may act with RecF and RecO. The polypeptide is Recombination protein RecR (Chelativorans sp. (strain BNC1)).